Consider the following 1104-residue polypeptide: Nitrite reductase [NAD(P)H] (1104 aa).

An FAD-binding site is contributed by 44–79; that stretch reads QKIVVVGLGMVAVAFIEKLVKLDSERRKYDIVVIGE. Residue 146-176 participates in NAD(+) binding; sequence YDILVLATGSDAVLPTSTPGHDAKGIFVYRT. A disordered region spans residues 396-419; that stretch reads KFLPGQRPSAESIGAADPNREEEP. Residues C500, C502, C535, and C538 each coordinate [2Fe-2S] cluster. [4Fe-4S] cluster contacts are provided by C720, C726, C760, and C764. Position 764 (C764) interacts with siroheme. One can recognise a Rieske domain in the interval 932–1040; it reads WQPVIKADYF…VEEREDGWIY (109 aa). Residues C976, H978, C1001, and H1004 each contribute to the [2Fe-2S] cluster site. The segment at 1081-1104 is disordered; the sequence is GKRAGAKGIEGSKPTRSPSNTIDW. The segment covering 1094–1104 has biased composition (polar residues); it reads PTRSPSNTIDW.

Belongs to the nitrite and sulfite reductase 4Fe-4S domain family. As to quaternary structure, homodimer. Siroheme is required as a cofactor. The cofactor is [4Fe-4S] cluster. FAD serves as cofactor. Requires [2Fe-2S] cluster as cofactor.

The enzyme catalyses NH4(+) + 3 NADP(+) + 2 H2O = nitrite + 3 NADPH + 5 H(+). It carries out the reaction NH4(+) + 3 NAD(+) + 2 H2O = nitrite + 3 NADH + 5 H(+). It functions in the pathway nitrogen metabolism; nitrate reduction (assimilation). The protein is Nitrite reductase [NAD(P)H] (niiA) of Emericella nidulans (strain FGSC A4 / ATCC 38163 / CBS 112.46 / NRRL 194 / M139) (Aspergillus nidulans).